Here is an 86-residue protein sequence, read N- to C-terminus: RNA-binding protein Hfq (86 aa).

Residues 9–68 (DPYLNTLRKEKVGVSIYLVNGIKLQGTIESFDQFVILLKNTVSQMVYKHAISTVVPVRPI) enclose the Sm domain.

It belongs to the Hfq family. In terms of assembly, homohexamer.

Its function is as follows. RNA chaperone that binds small regulatory RNA (sRNAs) and mRNAs to facilitate mRNA translational regulation in response to envelope stress, environmental stress and changes in metabolite concentrations. Also binds with high specificity to tRNAs. The sequence is that of RNA-binding protein Hfq from Pseudomonas savastanoi pv. phaseolicola (strain 1448A / Race 6) (Pseudomonas syringae pv. phaseolicola (strain 1448A / Race 6)).